Consider the following 205-residue polypeptide: Ras-related and estrogen-regulated growth inhibitor-like protein (205 aa).

The interval 1–205 is small GTPase-like; the sequence is MSNFLHLKYN…NVFGKRRKSV (205 aa). Residues 11-18, 58-64, and 123-126 contribute to the GTP site; these read EKSVSVTK, DPCSQTQ, and NKRD.

This sequence belongs to the small GTPase superfamily. Ras family.

The catalysed reaction is GTP + H2O = GDP + phosphate + H(+). Its function is as follows. Binds GDP/GTP and may possess intrinsic GTPase activity. This Homo sapiens (Human) protein is Ras-related and estrogen-regulated growth inhibitor-like protein (RERGL).